Reading from the N-terminus, the 130-residue chain is Larval cuticle protein 1 (130 aa).

The N-terminal stretch at 1–16 (MFKFVMICAVLGLAVA) is a signal peptide. The Chitin-binding type R&amp;R domain occupies 43 to 104 (ADGFDSSLHT…PSGAWIPTPP (62 aa)).

Its function is as follows. Component of the larval cuticle. This is Larval cuticle protein 1 (Lcp1) from Drosophila melanogaster (Fruit fly).